We begin with the raw amino-acid sequence, 147 residues long: Succinate dehydrogenase assembly factor 2, mitochondrial (147 aa).

It belongs to the SDHAF2 family. Interacts with the flavoprotein subunit within the SDH catalytic dimer.

Its subcellular location is the mitochondrion matrix. Its function is as follows. Plays an essential role in the assembly of succinate dehydrogenase (SDH), an enzyme complex (also referred to as respiratory complex II) that is a component of both the tricarboxylic acid (TCA) cycle and the mitochondrial electron transport chain, and which couples the oxidation of succinate to fumarate with the reduction of ubiquinone (coenzyme Q) to ubiquinol. Required for flavinylation (covalent attachment of FAD) of the flavoprotein subunit of the SDH catalytic dimer. This is Succinate dehydrogenase assembly factor 2, mitochondrial from Drosophila grimshawi (Hawaiian fruit fly).